The primary structure comprises 366 residues: Aldo-keto reductase AFTS1 (366 aa).

Aspartate 75 serves as a coordination point for NADP(+). The Proton donor role is filled by tyrosine 80. Substrate is bound at residue histidine 172. NADP(+)-binding positions include 202–203 (SS), glutamine 228, 257–267 (GSLASGRLARP), and 329–337 (SSVERIDEA).

The protein belongs to the aldo/keto reductase family.

Its pathway is mycotoxin biosynthesis. In terms of biological role, aldo-keto reductase; part of the gene clusters that mediate the biosynthesis of the host-selective toxins (HSTs) AF-toxins responsible for Alternaria black spot of strawberry disease by the strawberry pathotype. AF-toxin I and III are valine derivatives of 2,3-dyhydroxy-isovaleric acid and 2-hydroxy-isovaleric acid respectively, while AF II is an isoleucine derivative of 2-hydroxy-valeric acid. These derivatives are bound to a 9,10-epoxy-8-hydroxy-9-methyl-decatrienoic acid (EDA) moiety. On cellular level, AF-toxins affect plasma membrane of susceptible cells and cause a sudden increase in loss of K(+) after a few minutes of toxin treatment. The aldo-keto reductase AFTS1 catalyzes the conversion of 2-keto-isovaleric acid (2-KIV) to 2-hydroxy-isovaleric acid (2-HIV) by reduction of its ketone to an alcohol. The acyl-CoA ligase AFT1, the hydrolase AFT2 and the enoyl-CoA hydratases AFT3 and AFT6, but also the polyketide synthase AFT9, the acyl-CoA dehydrogenase AFT10, the cytochrome P450 monooxygenase AFT11 and the oxidoreductase AFT12 are all involved in the biosynthesis of the AK-, AF- and ACT-toxin common EDA structural moiety. The exact function of each enzyme, and of additional enzymes identified within the AF-toxin clusters have still to be determined. This is Aldo-keto reductase AFTS1 from Alternaria alternata (Alternaria rot fungus).